The primary structure comprises 252 residues: Adenosylcobinamide-GDP ribazoletransferase (252 aa).

The next 6 helical transmembrane spans lie at 29–49 (LYWF…LGYV), 50–70 (GSLS…GIVL), 104–124 (VGSF…VAVV), 129–149 (FGLF…QVLL), 166–186 (FVAG…LALL), and 194–214 (FPTM…VGMV).

The protein belongs to the CobS family. The cofactor is Mg(2+).

It is found in the cell inner membrane. The catalysed reaction is alpha-ribazole + adenosylcob(III)inamide-GDP = adenosylcob(III)alamin + GMP + H(+). It catalyses the reaction alpha-ribazole 5'-phosphate + adenosylcob(III)inamide-GDP = adenosylcob(III)alamin 5'-phosphate + GMP + H(+). The protein operates within cofactor biosynthesis; adenosylcobalamin biosynthesis; adenosylcobalamin from cob(II)yrinate a,c-diamide: step 7/7. Joins adenosylcobinamide-GDP and alpha-ribazole to generate adenosylcobalamin (Ado-cobalamin). Also synthesizes adenosylcobalamin 5'-phosphate from adenosylcobinamide-GDP and alpha-ribazole 5'-phosphate. This is Adenosylcobinamide-GDP ribazoletransferase from Chlorobium chlorochromatii (strain CaD3).